The following is a 426-amino-acid chain: 3-phosphoshikimate 1-carboxyvinyltransferase (426 aa).

The 3-phosphoshikimate site is built by Lys21, Ser22, and Arg26. Residue Lys21 coordinates phosphoenolpyruvate. 2 residues coordinate phosphoenolpyruvate: Gly92 and Arg122. Positions 167, 168, 169, 195, 315, and 342 each coordinate 3-phosphoshikimate. Gln169 provides a ligand contact to phosphoenolpyruvate. Residue Asp315 is the Proton acceptor of the active site. Phosphoenolpyruvate is bound by residues Arg346 and Arg386.

The protein belongs to the EPSP synthase family. In terms of assembly, monomer.

It is found in the cytoplasm. It catalyses the reaction 3-phosphoshikimate + phosphoenolpyruvate = 5-O-(1-carboxyvinyl)-3-phosphoshikimate + phosphate. The protein operates within metabolic intermediate biosynthesis; chorismate biosynthesis. Its function is as follows. Catalyzes the transfer of the enolpyruvyl moiety of phosphoenolpyruvate (PEP) to the 5-hydroxyl of shikimate-3-phosphate (S3P) to produce enolpyruvyl shikimate-3-phosphate and inorganic phosphate. In Methanosphaera stadtmanae (strain ATCC 43021 / DSM 3091 / JCM 11832 / MCB-3), this protein is 3-phosphoshikimate 1-carboxyvinyltransferase.